Here is a 370-residue protein sequence, read N- to C-terminus: Histidinol-phosphate aminotransferase 1 (370 aa).

Lysine 222 is subject to N6-(pyridoxal phosphate)lysine.

It belongs to the class-II pyridoxal-phosphate-dependent aminotransferase family. Histidinol-phosphate aminotransferase subfamily. Homodimer. It depends on pyridoxal 5'-phosphate as a cofactor.

It carries out the reaction L-histidinol phosphate + 2-oxoglutarate = 3-(imidazol-4-yl)-2-oxopropyl phosphate + L-glutamate. Its pathway is amino-acid biosynthesis; L-histidine biosynthesis; L-histidine from 5-phospho-alpha-D-ribose 1-diphosphate: step 7/9. The sequence is that of Histidinol-phosphate aminotransferase 1 (hisC1) from Bacillus cereus (strain ATCC 14579 / DSM 31 / CCUG 7414 / JCM 2152 / NBRC 15305 / NCIMB 9373 / NCTC 2599 / NRRL B-3711).